The chain runs to 124 residues: V-type proton ATPase subunit F (124 aa).

The protein belongs to the V-ATPase F subunit family. V-ATPase is a heteromultimeric enzyme composed of a peripheral catalytic V1 complex (components A to H) attached to an integral membrane V0 proton pore complex (components: a, c, c', c'', d, e, f and VOA1).

It localises to the vacuole membrane. In terms of biological role, subunit of the V1 complex of vacuolar(H+)-ATPase (V-ATPase), a multisubunit enzyme composed of a peripheral complex (V1) that hydrolyzes ATP and a membrane integral complex (V0) that translocates protons. V-ATPase is responsible for acidifying and maintaining the pH of intracellular compartments. The chain is V-type proton ATPase subunit F (vma-7) from Neurospora crassa (strain ATCC 24698 / 74-OR23-1A / CBS 708.71 / DSM 1257 / FGSC 987).